The sequence spans 185 residues: Ribosome-recycling factor (185 aa).

It belongs to the RRF family.

The protein resides in the cytoplasm. Responsible for the release of ribosomes from messenger RNA at the termination of protein biosynthesis. May increase the efficiency of translation by recycling ribosomes from one round of translation to another. The polypeptide is Ribosome-recycling factor (Arthrobacter sp. (strain FB24)).